The following is a 242-amino-acid chain: Invasion chromosome antigen R (242 aa).

It is found in the secreted. Its function is as follows. May contribute to pathogenesis, although some of its characteristics suggest it is a fossil gene. This chain is Invasion chromosome antigen R, found in Shigella flexneri serotype 5a (strain M90T).